A 290-amino-acid polypeptide reads, in one-letter code: Glutamyl-Q tRNA(Asp) synthetase (290 aa).

Residues 9-13 (RFAPS) and Glu-45 each bind L-glutamate. The 'HIGH' region signature appears at 12-22 (PSPSGSLHFGS). 4 residues coordinate Zn(2+): Cys-101, Cys-103, Tyr-115, and Cys-119. L-glutamate contacts are provided by Tyr-170 and Arg-188. Positions 226 to 230 (KLSKQ) match the 'KMSKS' region motif. Lys-229 contributes to the ATP binding site.

This sequence belongs to the class-I aminoacyl-tRNA synthetase family. GluQ subfamily. Requires Zn(2+) as cofactor.

In terms of biological role, catalyzes the tRNA-independent activation of glutamate in presence of ATP and the subsequent transfer of glutamate onto a tRNA(Asp). Glutamate is transferred on the 2-amino-5-(4,5-dihydroxy-2-cyclopenten-1-yl) moiety of the queuosine in the wobble position of the QUC anticodon. This is Glutamyl-Q tRNA(Asp) synthetase from Shewanella amazonensis (strain ATCC BAA-1098 / SB2B).